A 252-amino-acid chain; its full sequence is Geranylgeranylglyceryl phosphate synthase (252 aa).

Positions 26 and 55 each coordinate Mg(2+). Sn-glycerol 1-phosphate-binding positions include 174 to 180 (YLEAGSG), 205 to 206 (GG), and 227 to 228 (GT).

This sequence belongs to the GGGP/HepGP synthase family. Group II subfamily. Mg(2+) is required as a cofactor.

It is found in the cytoplasm. The enzyme catalyses sn-glycerol 1-phosphate + (2E,6E,10E)-geranylgeranyl diphosphate = sn-3-O-(geranylgeranyl)glycerol 1-phosphate + diphosphate. It participates in membrane lipid metabolism; glycerophospholipid metabolism. Functionally, prenyltransferase that catalyzes the transfer of the geranylgeranyl moiety of geranylgeranyl diphosphate (GGPP) to the C3 hydroxyl of sn-glycerol-1-phosphate (G1P). This reaction is the first ether-bond-formation step in the biosynthesis of archaeal membrane lipids. This chain is Geranylgeranylglyceryl phosphate synthase, found in Thermococcus gammatolerans (strain DSM 15229 / JCM 11827 / EJ3).